A 564-amino-acid chain; its full sequence is Putative ABC transporter ATP-binding protein PBPRA2240 (564 aa).

ABC transporter domains follow at residues 3-244 and 299-533; these read IEFS…GIRE and LTVN…ANLT. ATP-binding positions include 37–44 and 332–339; these read GPSGSGKS and GKNGSGKS.

This sequence belongs to the ABC transporter superfamily.

It localises to the cell inner membrane. Functionally, probably part of an ABC transporter complex. Responsible for energy coupling to the transport system. This is Putative ABC transporter ATP-binding protein PBPRA2240 from Photobacterium profundum (strain SS9).